A 121-amino-acid chain; its full sequence is Small ribosomal subunit protein uS13 (121 aa).

The interval 95 to 121 (LPMRGQRTRTNARTRKGPRKAAASLKK) is disordered.

This sequence belongs to the universal ribosomal protein uS13 family. As to quaternary structure, part of the 30S ribosomal subunit. Forms a loose heterodimer with protein S19. Forms two bridges to the 50S subunit in the 70S ribosome.

In terms of biological role, located at the top of the head of the 30S subunit, it contacts several helices of the 16S rRNA. In the 70S ribosome it contacts the 23S rRNA (bridge B1a) and protein L5 of the 50S subunit (bridge B1b), connecting the 2 subunits; these bridges are implicated in subunit movement. Contacts the tRNAs in the A and P-sites. The protein is Small ribosomal subunit protein uS13 of Polaromonas naphthalenivorans (strain CJ2).